The chain runs to 81 residues: ATP synthase subunit c, chloroplastic (81 aa).

Helical transmembrane passes span 3-23 (PLIS…ASIG) and 57-77 (LAFM…LLFA).

This sequence belongs to the ATPase C chain family. In terms of assembly, F-type ATPases have 2 components, F(1) - the catalytic core - and F(0) - the membrane proton channel. F(1) has five subunits: alpha(3), beta(3), gamma(1), delta(1), epsilon(1). F(0) has four main subunits: a(1), b(1), b'(1) and c(10-14). The alpha and beta chains form an alternating ring which encloses part of the gamma chain. F(1) is attached to F(0) by a central stalk formed by the gamma and epsilon chains, while a peripheral stalk is formed by the delta, b and b' chains.

The protein localises to the plastid. The protein resides in the chloroplast thylakoid membrane. Functionally, f(1)F(0) ATP synthase produces ATP from ADP in the presence of a proton or sodium gradient. F-type ATPases consist of two structural domains, F(1) containing the extramembraneous catalytic core and F(0) containing the membrane proton channel, linked together by a central stalk and a peripheral stalk. During catalysis, ATP synthesis in the catalytic domain of F(1) is coupled via a rotary mechanism of the central stalk subunits to proton translocation. In terms of biological role, key component of the F(0) channel; it plays a direct role in translocation across the membrane. A homomeric c-ring of between 10-14 subunits forms the central stalk rotor element with the F(1) delta and epsilon subunits. The protein is ATP synthase subunit c, chloroplastic of Ipomoea purpurea (Common morning glory).